The sequence spans 576 residues: Arginine--tRNA ligase (576 aa).

The 'HIGH' region signature appears at 122 to 132 (PNVAKQMHVGH).

The protein belongs to the class-I aminoacyl-tRNA synthetase family. Monomer.

Its subcellular location is the cytoplasm. It catalyses the reaction tRNA(Arg) + L-arginine + ATP = L-arginyl-tRNA(Arg) + AMP + diphosphate. This is Arginine--tRNA ligase from Yersinia enterocolitica serotype O:8 / biotype 1B (strain NCTC 13174 / 8081).